The following is a 376-amino-acid chain: uncharacterized protein (376 aa).

A signal peptide spans Met1–Thr28. The N-palmitoyl cysteine moiety is linked to residue Cys29. A lipid anchor (S-diacylglycerol cysteine) is attached at Cys29.

Belongs to the TP013X lipoprotein family.

Its subcellular location is the cell membrane. This is an uncharacterized protein from Treponema pallidum (strain Nichols).